The sequence spans 60 residues: Large ribosomal subunit protein eL37 (60 aa).

Residues cysteine 19, cysteine 22, cysteine 34, and cysteine 37 each coordinate Zn(2+). The segment at 19-37 (CRRCGRMSYHKRHKICSSC) adopts a C4-type zinc-finger fold.

This sequence belongs to the eukaryotic ribosomal protein eL37 family. Requires Zn(2+) as cofactor.

Functionally, binds to the 23S rRNA. This chain is Large ribosomal subunit protein eL37, found in Methanospirillum hungatei JF-1 (strain ATCC 27890 / DSM 864 / NBRC 100397 / JF-1).